The following is a 256-amino-acid chain: Thiazole synthase (256 aa).

The active-site Schiff-base intermediate with DXP is Lys-98. 1-deoxy-D-xylulose 5-phosphate-binding positions include Gly-159, Ala-185–Gly-186, and Asn-207–Thr-208.

This sequence belongs to the ThiG family. Homotetramer. Forms heterodimers with either ThiH or ThiS.

The protein resides in the cytoplasm. It catalyses the reaction [ThiS sulfur-carrier protein]-C-terminal-Gly-aminoethanethioate + 2-iminoacetate + 1-deoxy-D-xylulose 5-phosphate = [ThiS sulfur-carrier protein]-C-terminal Gly-Gly + 2-[(2R,5Z)-2-carboxy-4-methylthiazol-5(2H)-ylidene]ethyl phosphate + 2 H2O + H(+). The protein operates within cofactor biosynthesis; thiamine diphosphate biosynthesis. Catalyzes the rearrangement of 1-deoxy-D-xylulose 5-phosphate (DXP) to produce the thiazole phosphate moiety of thiamine. Sulfur is provided by the thiocarboxylate moiety of the carrier protein ThiS. In vitro, sulfur can be provided by H(2)S. The protein is Thiazole synthase of Aliivibrio fischeri (strain ATCC 700601 / ES114) (Vibrio fischeri).